Consider the following 203-residue polypeptide: Dephospho-CoA kinase (203 aa).

Residues 4 to 203 enclose the DPCK domain; the sequence is VIGITGGIAT…EEGYIQSESE (200 aa). An ATP-binding site is contributed by 12-17; sequence ATGKST.

Belongs to the CoaE family.

It is found in the cytoplasm. It carries out the reaction 3'-dephospho-CoA + ATP = ADP + CoA + H(+). It participates in cofactor biosynthesis; coenzyme A biosynthesis; CoA from (R)-pantothenate: step 5/5. In terms of biological role, catalyzes the phosphorylation of the 3'-hydroxyl group of dephosphocoenzyme A to form coenzyme A. In Staphylococcus epidermidis (strain ATCC 35984 / DSM 28319 / BCRC 17069 / CCUG 31568 / BM 3577 / RP62A), this protein is Dephospho-CoA kinase.